A 429-amino-acid chain; its full sequence is Adenylosuccinate synthetase (429 aa).

Residues 12–18 and 40–42 contribute to the GTP site; these read GDEGKGK and GHT. The Proton acceptor role is filled by Asp-13. 2 residues coordinate Mg(2+): Asp-13 and Gly-40. Residues 13 to 16, 38 to 41, Thr-129, Arg-143, Gln-223, Thr-238, and Arg-302 contribute to the IMP site; these read DEGK and NAGH. The Proton donor role is filled by His-41. 298–304 is a binding site for substrate; it reads TVTGRRR. GTP is bound by residues Arg-304, 330–332, and 412–414; these read KLD and STS.

This sequence belongs to the adenylosuccinate synthetase family. In terms of assembly, homodimer. It depends on Mg(2+) as a cofactor.

It is found in the cytoplasm. It catalyses the reaction IMP + L-aspartate + GTP = N(6)-(1,2-dicarboxyethyl)-AMP + GDP + phosphate + 2 H(+). It functions in the pathway purine metabolism; AMP biosynthesis via de novo pathway; AMP from IMP: step 1/2. In terms of biological role, plays an important role in the de novo pathway of purine nucleotide biosynthesis. Catalyzes the first committed step in the biosynthesis of AMP from IMP. This Zymomonas mobilis subsp. mobilis (strain ATCC 31821 / ZM4 / CP4) protein is Adenylosuccinate synthetase.